A 294-amino-acid polypeptide reads, in one-letter code: Picrinine-N-methytransferase TMT2 (294 aa).

Residues 75 to 84 are SAM motif I; it reads LLDVGCGLGG. Residues 137-143 carry the Vacuolar targeting signal motif; the sequence is DGEFDVV. The tract at residues 138 to 146 is SAM motif II; that stretch reads GEFDVVFTL. The SAM motif III stretch occupies residues 165–174; it reads VGSPGAAIVV.

The protein belongs to the class I-like SAM-binding methyltransferase superfamily. gTMT family. In terms of assembly, homodimer.

The protein localises to the vacuole membrane. The enzyme catalyses picrinine + S-adenosyl-L-methionine = ervincine + S-adenosyl-L-homocysteine + H(+). Its pathway is alkaloid biosynthesis; vindoline biosynthesis. S-adenosyl-L-methionine-dependent N-methyltransferase involved in the biosynthesis of biologically active monoterpenoid indole alkaloids (MIAs) natural products including vindoline. Catalyzes the conversion of picrinine to N-methylpicrinine (ervincine). This chain is Picrinine-N-methytransferase TMT2, found in Catharanthus roseus (Madagascar periwinkle).